We begin with the raw amino-acid sequence, 162 residues long: uncharacterized protein (162 aa).

The segment covering 65 to 76 (EEKPLEVAQDRN) has biased composition (basic and acidic residues). Residues 65 to 93 (EEKPLEVAQDRNNKRKAPSHLEPAHDFIS) are disordered.

This is an uncharacterized protein from Bacillus subtilis (strain 168).